Here is a 258-residue protein sequence, read N- to C-terminus: Imidazole glycerol phosphate synthase subunit HisF (258 aa).

Active-site residues include aspartate 11 and aspartate 130.

It belongs to the HisA/HisF family. Heterodimer of HisH and HisF.

The protein localises to the cytoplasm. The enzyme catalyses 5-[(5-phospho-1-deoxy-D-ribulos-1-ylimino)methylamino]-1-(5-phospho-beta-D-ribosyl)imidazole-4-carboxamide + L-glutamine = D-erythro-1-(imidazol-4-yl)glycerol 3-phosphate + 5-amino-1-(5-phospho-beta-D-ribosyl)imidazole-4-carboxamide + L-glutamate + H(+). The protein operates within amino-acid biosynthesis; L-histidine biosynthesis; L-histidine from 5-phospho-alpha-D-ribose 1-diphosphate: step 5/9. Its function is as follows. IGPS catalyzes the conversion of PRFAR and glutamine to IGP, AICAR and glutamate. The HisF subunit catalyzes the cyclization activity that produces IGP and AICAR from PRFAR using the ammonia provided by the HisH subunit. This chain is Imidazole glycerol phosphate synthase subunit HisF, found in Nitrobacter winogradskyi (strain ATCC 25391 / DSM 10237 / CIP 104748 / NCIMB 11846 / Nb-255).